The following is a 414-amino-acid chain: uncharacterized protein (414 aa).

Residues 367–384 (TTWALTLICIACILLFFV) form a helical membrane-spanning segment.

The protein localises to the virion membrane. This is an uncharacterized protein from Human cytomegalovirus (strain Merlin) (HHV-5).